The following is a 343-amino-acid chain: Aspartate carbamoyltransferase catalytic subunit (343 aa).

Carbamoyl phosphate contacts are provided by arginine 91 and threonine 92. L-aspartate is bound at residue lysine 119. Carbamoyl phosphate-binding residues include arginine 141, histidine 171, and glutamine 174. Arginine 204 and arginine 259 together coordinate L-aspartate. Residues glycine 300 and proline 301 each contribute to the carbamoyl phosphate site.

Belongs to the aspartate/ornithine carbamoyltransferase superfamily. ATCase family. In terms of assembly, heterododecamer (2C3:3R2) of six catalytic PyrB chains organized as two trimers (C3), and six regulatory PyrI chains organized as three dimers (R2).

The enzyme catalyses carbamoyl phosphate + L-aspartate = N-carbamoyl-L-aspartate + phosphate + H(+). It functions in the pathway pyrimidine metabolism; UMP biosynthesis via de novo pathway; (S)-dihydroorotate from bicarbonate: step 2/3. In terms of biological role, catalyzes the condensation of carbamoyl phosphate and aspartate to form carbamoyl aspartate and inorganic phosphate, the committed step in the de novo pyrimidine nucleotide biosynthesis pathway. The polypeptide is Aspartate carbamoyltransferase catalytic subunit (Burkholderia multivorans (strain ATCC 17616 / 249)).